The sequence spans 332 residues: Ribosomal RNA small subunit methyltransferase H (332 aa).

S-adenosyl-L-methionine-binding positions include 39–41, Asp56, Phe83, Asp100, and Gln107; that span reads GGY.

This sequence belongs to the methyltransferase superfamily. RsmH family.

Its subcellular location is the cytoplasm. It carries out the reaction cytidine(1402) in 16S rRNA + S-adenosyl-L-methionine = N(4)-methylcytidine(1402) in 16S rRNA + S-adenosyl-L-homocysteine + H(+). Specifically methylates the N4 position of cytidine in position 1402 (C1402) of 16S rRNA. The polypeptide is Ribosomal RNA small subunit methyltransferase H (Bartonella quintana (strain Toulouse) (Rochalimaea quintana)).